The primary structure comprises 280 residues: MAQIDGLPPLREVIAAHKLSAKKSLGQNFLLDLNLTARIARVPGDLSGADVLEVGPGPGGLTRGLLAEGARKVLAIEKDARCLPALQQIAAAYPGRLEVIEGDALEVDATAYLSPPIHIAANLPYNVGTELLVRWLTPPDWPPFWRTLTLMFQREVAERIVAKPGSKAYGRLAILAQWRAEAEIALTLPPQAFIPAPKVHSAVVHLRARTEPRYPADAAVLSRVVATAFNQRRKMLRASLKGLTPGIEDHLAAVGIDPTRRAETLSLEEFCALARQIAAG.

S-adenosyl-L-methionine is bound by residues N28, L30, G55, E77, D103, and N122.

It belongs to the class I-like SAM-binding methyltransferase superfamily. rRNA adenine N(6)-methyltransferase family. RsmA subfamily.

It is found in the cytoplasm. It catalyses the reaction adenosine(1518)/adenosine(1519) in 16S rRNA + 4 S-adenosyl-L-methionine = N(6)-dimethyladenosine(1518)/N(6)-dimethyladenosine(1519) in 16S rRNA + 4 S-adenosyl-L-homocysteine + 4 H(+). Its function is as follows. Specifically dimethylates two adjacent adenosines (A1518 and A1519) in the loop of a conserved hairpin near the 3'-end of 16S rRNA in the 30S particle. May play a critical role in biogenesis of 30S subunits. The chain is Ribosomal RNA small subunit methyltransferase A from Dinoroseobacter shibae (strain DSM 16493 / NCIMB 14021 / DFL 12).